The following is a 316-amino-acid chain: Lys-63-specific deubiquitinase BRCC36 (316 aa).

Ala2 bears the N-acetylalanine mark. The 168-residue stretch at 12-179 folds into the MPN domain; it reads VHLESDAFLV…YTCFQSIQAQ (168 aa). His122, His124, and Asp135 together coordinate Zn(2+). The JAMM motif motif lies at 122-135; it reads HSHPHITVWPSHVD. Ser258 carries the post-translational modification Phosphoserine.

This sequence belongs to the peptidase M67A family. BRCC36 subfamily. In terms of assembly, component of the ARISC complex, at least composed of UIMC1/RAP80, ABRAXAS1, BRCC3/BRCC36, BABAM2 and BABAM1/NBA1. Component of the BRCA1-A complex, at least composed of BRCA1, BARD1, UIMC1/RAP80, ABRAXAS1, BRCC3/BRCC36, babam2 and BABAM1/NBA1. In the BRCA1-A complex, interacts directly with ABRAXAS1 and babam2. Component of the BRISC complex, at least composed of ABRAXAS2, BRCC3/BRCC36, BABAM2 and BABAM1/NBA1. Identified in a complex with SHMT2 and the other subunits of the BRISC complex. In the BRISC complex, interacts directly with ABRAXAS2. Identified in a complex with ABRAXAS2 and NUMA1. The BRISC complex interacts with the CSN complex. Component of the BRCA1/BRCA2 containing complex (BRCC), which also contains BRCA1, BRCA2, BARD1, BABAM2 and RAD51. BRCC is a ubiquitin E3 ligase complex that enhances cellular survival following DNA damage. Interacts with BRCA1. Binds polyubiquitin. Interacts with PWWP2B. Interacts with HDAC1; this interaction is enhanced in the presence of PWWP2B. Zn(2+) serves as cofactor. In terms of tissue distribution, heart, brain, placenta, lung, liver, skeletal muscle, kidney and pancreas. Aberrantly expressed in the vast majority of breast tumors.

The protein localises to the nucleus. It localises to the cytoplasm. The protein resides in the cytoskeleton. Its subcellular location is the spindle pole. Metalloprotease that specifically cleaves 'Lys-63'-linked polyubiquitin chains. Does not have activity toward 'Lys-48'-linked polyubiquitin chains. Component of the BRCA1-A complex, a complex that specifically recognizes 'Lys-63'-linked ubiquitinated histones H2A and H2AX at DNA lesions sites, leading to target the BRCA1-BARD1 heterodimer to sites of DNA damage at double-strand breaks (DSBs). In the BRCA1-A complex, it specifically removes 'Lys-63'-linked ubiquitin on histones H2A and H2AX, antagonizing the RNF8-dependent ubiquitination at double-strand breaks (DSBs). Catalytic subunit of the BRISC complex, a multiprotein complex that specifically cleaves 'Lys-63'-linked ubiquitin in various substrates. Mediates the specific 'Lys-63'-specific deubiquitination associated with the COP9 signalosome complex (CSN), via the interaction of the BRISC complex with the CSN complex. The BRISC complex is required for normal mitotic spindle assembly and microtubule attachment to kinetochores via its role in deubiquitinating NUMA1. Plays a role in interferon signaling via its role in the deubiquitination of the interferon receptor IFNAR1; deubiquitination increases IFNAR1 activity by enhancing its stability and cell surface expression. Acts as a regulator of the NLRP3 inflammasome by mediating deubiquitination of NLRP3, leading to NLRP3 inflammasome assembly. Down-regulates the response to bacterial lipopolysaccharide (LPS) via its role in IFNAR1 deubiquitination. Deubiquitinates HDAC1 and PWWP2B leading to their stabilization. The sequence is that of Lys-63-specific deubiquitinase BRCC36 (BRCC3) from Homo sapiens (Human).